Here is a 291-residue protein sequence, read N- to C-terminus: MLNKFFKKTKYITVSQRALGDIHDDFTKKPSIPNGMWVKCDGCGKVLYKNDMEKNNKVCYHCGYHFRMNALERLELILDKESFYEFDKDITAANPIEFKGYEDKIKNMQNKTNIKEAVITGKGTIGREEAVVCIMDSNFMMGSMGSVVGEKITRAVEKSIELKLPLIIFTTSGGARMQEGIFSLMQMAKVSGAISRLNEEGLLYLSVLTDPTTGGVTASFAMIGDIILAEPGALIGFAGKRVIEQTIKQKLPEGFQKAEFLLQHGFIDNIVSRENLKETLRKILVIHGRGN.

Residues 36–291 (MWVKCDGCGK…KILVIHGRGN (256 aa)) form the CoA carboxyltransferase N-terminal domain. 4 residues coordinate Zn(2+): cysteine 40, cysteine 43, cysteine 59, and cysteine 62. Residues 40–62 (CDGCGKVLYKNDMEKNNKVCYHC) form a C4-type zinc finger.

It belongs to the AccD/PCCB family. As to quaternary structure, acetyl-CoA carboxylase is a heterohexamer composed of biotin carboxyl carrier protein (AccB), biotin carboxylase (AccC) and two subunits each of ACCase subunit alpha (AccA) and ACCase subunit beta (AccD). Zn(2+) serves as cofactor.

It localises to the cytoplasm. The enzyme catalyses N(6)-carboxybiotinyl-L-lysyl-[protein] + acetyl-CoA = N(6)-biotinyl-L-lysyl-[protein] + malonyl-CoA. Its pathway is lipid metabolism; malonyl-CoA biosynthesis; malonyl-CoA from acetyl-CoA: step 1/1. Component of the acetyl coenzyme A carboxylase (ACC) complex. Biotin carboxylase (BC) catalyzes the carboxylation of biotin on its carrier protein (BCCP) and then the CO(2) group is transferred by the transcarboxylase to acetyl-CoA to form malonyl-CoA. This Clostridium kluyveri (strain NBRC 12016) protein is Acetyl-coenzyme A carboxylase carboxyl transferase subunit beta.